A 181-amino-acid polypeptide reads, in one-letter code: Adenine phosphoribosyltransferase (181 aa).

It belongs to the purine/pyrimidine phosphoribosyltransferase family. In terms of assembly, homodimer.

Its subcellular location is the cytoplasm. It carries out the reaction AMP + diphosphate = 5-phospho-alpha-D-ribose 1-diphosphate + adenine. It participates in purine metabolism; AMP biosynthesis via salvage pathway; AMP from adenine: step 1/1. In terms of biological role, catalyzes a salvage reaction resulting in the formation of AMP, that is energically less costly than de novo synthesis. The chain is Adenine phosphoribosyltransferase from Brucella anthropi (strain ATCC 49188 / DSM 6882 / CCUG 24695 / JCM 21032 / LMG 3331 / NBRC 15819 / NCTC 12168 / Alc 37) (Ochrobactrum anthropi).